Here is a 771-residue protein sequence, read N- to C-terminus: PH and SEC7 domain-containing protein 2 (771 aa).

2 disordered regions span residues 1 to 67 and 107 to 136; these read MEED…PDVA and GDNA…VRDG. Residues 47–66 are compositionally biased toward basic and acidic residues; that stretch reads GHERRGTPADTEEPTKDPDV. Ser-191 is subject to Phosphoserine. Disordered stretches follow at residues 207-230 and 244-307; these read GDMG…SSSR and PNGF…ANGC. Residues 218 to 230 are compositionally biased toward low complexity; that stretch reads LGSPLRRSISSSR. Positions 257–266 are enriched in acidic residues; it reads GDEDDDEEDT. Positions 260–462 constitute an SEC7 domain; that stretch reads DDDEEDTDKL…KTLYNSIKNE (203 aa). The span at 288–299 shows a compositional bias: low complexity; that stretch reads ELSSSEGLEPGS. A PH domain is found at 512–625; that stretch reads TTYKHGVLTR…WILRINLVAA (114 aa). Residues 622–639 form a helical membrane-spanning segment; that stretch reads LVAAIFSAPAFPAAVSSM. Residues 651 to 680 adopt a coiled-coil conformation; that stretch reads TTRLCQEEQLRSHENKLRQLTAELAEHRCH. The tract at residues 739–771 is disordered; it reads DDPSLRKTHSSPALSQGHVTGSKTTKDATGPDT. Residues 748–761 show a composition bias toward polar residues; the sequence is SSPALSQGHVTGSK.

Belongs to the PSD family.

It localises to the cell membrane. It is found in the cell projection. The protein resides in the ruffle membrane. The protein localises to the cleavage furrow. The protein is PH and SEC7 domain-containing protein 2 (PSD2) of Homo sapiens (Human).